Consider the following 206-residue polypeptide: Ras-related protein Rab-7a (206 aa).

15 to 22 serves as a coordination point for GTP; the sequence is GDSGVGKT. Ser17 and Ser23 each carry phosphoserine. Residues Thr34, Thr40, and Thr64 each carry the phosphothreonine modification. Residues 34 to 40 and 63 to 67 each bind GTP; these read TQQYRAT and DTAGQ. Residues 37-45 carry the Effector region motif; the sequence is YRATVGADF. A Phosphoserine modification is found at Ser72. 2 positions are modified to phosphotyrosine: Tyr78 and Tyr88. GTP contacts are provided by residues 125 to 128 and 157 to 158; these read NKLD and AK. 2 S-geranylgeranyl cysteine lipidation sites follow: Cys205 and Cys206.

Belongs to the small GTPase superfamily. Rab family.

Its subcellular location is the cytoplasmic vesicle. The protein resides in the phagosome membrane. It localises to the late endosome membrane. The protein localises to the lysosome membrane. It is found in the autophagosome membrane. Its subcellular location is the lipid droplet. The catalysed reaction is GTP + H2O = GDP + phosphate + H(+). Its function is as follows. Small GTPase which cycles between active GTP-bound and inactive GDP-bound states. In its active state, binds to a variety of effector proteins playing a key role in the regulation of endo-lysosomal trafficking. Governs early-to-late endosomal maturation, microtubule minus-end as well as plus-end directed endosomal migration and positioning, and endosome-lysosome transport through different protein-protein interaction cascades. Involved in lipophagy, a cytosolic lipase-independent autophagic pathway. Plays a role in phagocyte formation and acidification. This chain is Ras-related protein Rab-7a, found in Paramecium octaurelia.